Consider the following 253-residue polypeptide: Zwei Ig domain protein zig-4 (253 aa).

The signal sequence occupies residues 1–16 (MFAIALLSFLVVLINA). Ig-like C2-type domains are found at residues 43 to 146 (PAKI…AEVE) and 162 to 245 (PEIV…TFLY). 2 disulfides stabilise this stretch: cysteine 67/cysteine 130 and cysteine 183/cysteine 229.

Expressed in PVT, ASK, BAG, M2 and ASI neurons. In L1 larvae, expressed in pharyngeal ectoderm and mesoderm.

The protein resides in the secreted. Its function is as follows. Required for maintaining axon position of PVQ and PVP neurons postembryonically in the ventral nerve cord (VNC) by preventing axons drifting into the opposite side of the VNC that could occur during body growth and movement. This is Zwei Ig domain protein zig-4 from Caenorhabditis elegans.